The chain runs to 120 residues: Large ribosomal subunit protein uL18 (120 aa).

It belongs to the universal ribosomal protein uL18 family. In terms of assembly, part of the 50S ribosomal subunit; part of the 5S rRNA/L5/L18/L25 subcomplex. Contacts the 5S and 23S rRNAs.

This is one of the proteins that bind and probably mediate the attachment of the 5S RNA into the large ribosomal subunit, where it forms part of the central protuberance. The chain is Large ribosomal subunit protein uL18 from Rhodopseudomonas palustris (strain BisA53).